Here is a 390-residue protein sequence, read N- to C-terminus: 3-ketoacyl-CoA thiolase (390 aa).

Cys95 serves as the catalytic Acyl-thioester intermediate. Catalysis depends on proton acceptor residues His346 and Cys376.

It belongs to the thiolase-like superfamily. Thiolase family. In terms of assembly, heterotetramer of two alpha chains (FadB) and two beta chains (FadA).

It is found in the cytoplasm. The enzyme catalyses an acyl-CoA + acetyl-CoA = a 3-oxoacyl-CoA + CoA. It functions in the pathway lipid metabolism; fatty acid beta-oxidation. Functionally, catalyzes the final step of fatty acid oxidation in which acetyl-CoA is released and the CoA ester of a fatty acid two carbons shorter is formed. This Psychrobacter cryohalolentis (strain ATCC BAA-1226 / DSM 17306 / VKM B-2378 / K5) protein is 3-ketoacyl-CoA thiolase.